The chain runs to 764 residues: Putative wall-associated receptor kinase-like 13 (764 aa).

Residues 1 to 26 (MRGNKNYYFLSLLYFLSLPILHFSSC) form the signal peptide. Over 27–379 (THKCGDIQIP…HRCIDYHIPE (353 aa)) the chain is Extracellular. N-linked (GlcNAc...) asparagine glycosylation is found at asparagine 78, asparagine 114, asparagine 121, asparagine 164, asparagine 233, asparagine 238, asparagine 259, and asparagine 283. The tract at residues 308 to 372 (CTCDNHIASG…CINTSGGHRC (65 aa)) is atypical EGF-like. Intrachain disulfides connect cysteine 310–cysteine 323, cysteine 345–cysteine 363, and cysteine 352–cysteine 372. Asparagine 365 carries an N-linked (GlcNAc...) asparagine glycan. The helical transmembrane segment at 380–400 (VMLGLGAGFFVLIVGGGIWWW) threads the bilayer. Over 401-764 (RKLLRKRRMT…SGSTEIARSM (364 aa)) the chain is Cytoplasmic. Positions 454–728 (FNDNRVIGQG…REVSTALERI (275 aa)) constitute a Protein kinase domain. ATP-binding positions include 460-468 (IGQGGQGTV) and lysine 482. Phosphotyrosine is present on tyrosine 527. Aspartate 579 acts as the Proton acceptor in catalysis. Residues threonine 613 and threonine 618 each carry the phosphothreonine modification. Residue tyrosine 626 is modified to Phosphotyrosine.

It belongs to the protein kinase superfamily. Ser/Thr protein kinase family.

Its subcellular location is the membrane. It catalyses the reaction L-seryl-[protein] + ATP = O-phospho-L-seryl-[protein] + ADP + H(+). It carries out the reaction L-threonyl-[protein] + ATP = O-phospho-L-threonyl-[protein] + ADP + H(+). Putative serine/threonine-protein kinase that may function as a signaling receptor of extracellular matrix component. This is Putative wall-associated receptor kinase-like 13 (WAKL13) from Arabidopsis thaliana (Mouse-ear cress).